Reading from the N-terminus, the 198-residue chain is Dual specificity protein phosphatase 1 (198 aa).

The disordered stretch occupies residues Met1 to Gly20. A compositionally biased stretch (low complexity) spans Ser8–Ser17. A caM binding domain 1 region spans residues Glu26–Asp47. Positions Val50–Val191 constitute a Tyrosine-protein phosphatase domain. Cys135 serves as the catalytic Phosphocysteine intermediate. The tract at residues Met151–Arg180 is caM binding domain 2.

Belongs to the protein-tyrosine phosphatase family. Non-receptor class dual specificity subfamily. Interacts with calmodulin (CaM) in a calcium Ca(2+)-dependent manner. Expressed in roots, stems, leaves and flowers.

Its subcellular location is the nucleus. It is found in the cytoplasm. It carries out the reaction O-phospho-L-tyrosyl-[protein] + H2O = L-tyrosyl-[protein] + phosphate. The enzyme catalyses O-phospho-L-seryl-[protein] + H2O = L-seryl-[protein] + phosphate. It catalyses the reaction O-phospho-L-threonyl-[protein] + H2O = L-threonyl-[protein] + phosphate. With respect to regulation, inhibited by sodium vanadate and sodium tungstate. NaF and spermifine repress specifically phosphoserine and phosphothreonine phosphatase activity. Functionally, has a dual specificity toward Ser/Thr and Tyr-containing proteins. Dephosphorylates MPK4 in vitro. This is Dual specificity protein phosphatase 1 (DSPTP1) from Arabidopsis thaliana (Mouse-ear cress).